We begin with the raw amino-acid sequence, 308 residues long: 4-hydroxy-3-methylbut-2-enyl diphosphate reductase (308 aa).

Cys13 contributes to the [4Fe-4S] cluster binding site. Residues His42 and His75 each contribute to the (2E)-4-hydroxy-3-methylbut-2-enyl diphosphate site. Residues His42 and His75 each contribute to the dimethylallyl diphosphate site. Isopentenyl diphosphate contacts are provided by His42 and His75. Residue Cys97 participates in [4Fe-4S] cluster binding. Position 125 (His125) interacts with (2E)-4-hydroxy-3-methylbut-2-enyl diphosphate. His125 is a dimethylallyl diphosphate binding site. His125 lines the isopentenyl diphosphate pocket. Residue Glu127 is the Proton donor of the active site. Residue Thr165 coordinates (2E)-4-hydroxy-3-methylbut-2-enyl diphosphate. Cys195 contributes to the [4Fe-4S] cluster binding site. Residues Ser223, Ser224, Asn225, and Ser267 each contribute to the (2E)-4-hydroxy-3-methylbut-2-enyl diphosphate site. The dimethylallyl diphosphate site is built by Ser223, Ser224, Asn225, and Ser267. 4 residues coordinate isopentenyl diphosphate: Ser223, Ser224, Asn225, and Ser267.

This sequence belongs to the IspH family. [4Fe-4S] cluster is required as a cofactor.

It catalyses the reaction isopentenyl diphosphate + 2 oxidized [2Fe-2S]-[ferredoxin] + H2O = (2E)-4-hydroxy-3-methylbut-2-enyl diphosphate + 2 reduced [2Fe-2S]-[ferredoxin] + 2 H(+). The catalysed reaction is dimethylallyl diphosphate + 2 oxidized [2Fe-2S]-[ferredoxin] + H2O = (2E)-4-hydroxy-3-methylbut-2-enyl diphosphate + 2 reduced [2Fe-2S]-[ferredoxin] + 2 H(+). It functions in the pathway isoprenoid biosynthesis; dimethylallyl diphosphate biosynthesis; dimethylallyl diphosphate from (2E)-4-hydroxy-3-methylbutenyl diphosphate: step 1/1. It participates in isoprenoid biosynthesis; isopentenyl diphosphate biosynthesis via DXP pathway; isopentenyl diphosphate from 1-deoxy-D-xylulose 5-phosphate: step 6/6. Its function is as follows. Catalyzes the conversion of 1-hydroxy-2-methyl-2-(E)-butenyl 4-diphosphate (HMBPP) into a mixture of isopentenyl diphosphate (IPP) and dimethylallyl diphosphate (DMAPP). Acts in the terminal step of the DOXP/MEP pathway for isoprenoid precursor biosynthesis. This Chlamydia muridarum (strain MoPn / Nigg) protein is 4-hydroxy-3-methylbut-2-enyl diphosphate reductase.